The primary structure comprises 779 residues: Putative helicase V13 (779 aa).

Positions 477–642 (DNPKPFITSL…FVKEEELNEK (166 aa)) constitute an SF3 helicase domain. Residue 504–511 (GKSNAGKS) participates in ATP binding.

The sequence is that of Putative helicase V13 from Acanthamoeba polyphaga (Amoeba).